A 182-amino-acid polypeptide reads, in one-letter code: Auxin-responsive protein IAA9 (182 aa).

Residues 1-41 form a disordered region; sequence MELELGLAPPNSGHLVVDELSSSSSSGGGSGSAPVSASSAG. The EAR-like (transcriptional repression) signature appears at 3-7; that stretch reads LELGL. Residues 32–41 show a composition bias toward low complexity; that stretch reads SAPVSASSAG. One can recognise a PB1 domain in the interval 92–182; the sequence is ANYVKVKKEG…RSVKRLKILG (91 aa).

The protein belongs to the Aux/IAA family. As to quaternary structure, homodimers and heterodimers. As to expression, expressed in etiolated shoots and flowers.

The protein resides in the nucleus. Aux/IAA proteins are short-lived transcriptional factors that function as repressors of early auxin response genes at low auxin concentrations. This chain is Auxin-responsive protein IAA9 (IAA9), found in Oryza sativa subsp. japonica (Rice).